The primary structure comprises 471 residues: ATP synthase subunit beta (471 aa).

Residue 154–161 (GGAGVGKT) coordinates ATP.

The protein belongs to the ATPase alpha/beta chains family. F-type ATPases have 2 components, CF(1) - the catalytic core - and CF(0) - the membrane proton channel. CF(1) has five subunits: alpha(3), beta(3), gamma(1), delta(1), epsilon(1). CF(0) has three main subunits: a(1), b(2) and c(9-12). The alpha and beta chains form an alternating ring which encloses part of the gamma chain. CF(1) is attached to CF(0) by a central stalk formed by the gamma and epsilon chains, while a peripheral stalk is formed by the delta and b chains.

The protein localises to the cell membrane. It carries out the reaction ATP + H2O + 4 H(+)(in) = ADP + phosphate + 5 H(+)(out). Its function is as follows. Produces ATP from ADP in the presence of a proton gradient across the membrane. The catalytic sites are hosted primarily by the beta subunits. This Mesomycoplasma hyopneumoniae (strain 232) (Mycoplasma hyopneumoniae) protein is ATP synthase subunit beta.